A 93-amino-acid polypeptide reads, in one-letter code: Large ribosomal subunit protein uL23cz/uL23cy (93 aa).

This sequence belongs to the universal ribosomal protein uL23 family. As to quaternary structure, part of the 50S ribosomal subunit.

Its subcellular location is the plastid. It localises to the chloroplast. In terms of biological role, binds to 23S rRNA. This is Large ribosomal subunit protein uL23cz/uL23cy (rpl23-A) from Citrus sinensis (Sweet orange).